The primary structure comprises 150 residues: Large ribosomal subunit protein bL9 (150 aa).

This sequence belongs to the bacterial ribosomal protein bL9 family.

In terms of biological role, binds to the 23S rRNA. This is Large ribosomal subunit protein bL9 from Mycoplasma genitalium (strain ATCC 33530 / DSM 19775 / NCTC 10195 / G37) (Mycoplasmoides genitalium).